We begin with the raw amino-acid sequence, 732 residues long: Catalase-peroxidase (732 aa).

The tract at residues 1-26 is disordered; that stretch reads MDAKTDDQGGKCPFPHGGGSRGHRNR. Positions 97–219 form a cross-link, tryptophyl-tyrosyl-methioninium (Trp-Tyr) (with M-245); it reads WHSAGTYRTT…LGAVQMGLIY (123 aa). The Proton acceptor role is filled by histidine 98. A cross-link (tryptophyl-tyrosyl-methioninium (Tyr-Met) (with W-97)) is located at residues 219 to 245; the sequence is YVNPEGPNGNPDPVAAAKDIRETFARM. Heme b is bound at residue histidine 260.

This sequence belongs to the peroxidase family. Peroxidase/catalase subfamily. As to quaternary structure, homodimer or homotetramer. Heme b serves as cofactor. Formation of the three residue Trp-Tyr-Met cross-link is important for the catalase, but not the peroxidase activity of the enzyme.

The catalysed reaction is H2O2 + AH2 = A + 2 H2O. The enzyme catalyses 2 H2O2 = O2 + 2 H2O. Functionally, bifunctional enzyme with both catalase and broad-spectrum peroxidase activity. The sequence is that of Catalase-peroxidase from Rhodopseudomonas palustris (strain BisB5).